Reading from the N-terminus, the 545-residue chain is Membrane protein insertase YidC (545 aa).

The next 4 helical transmembrane spans lie at 350-370 (IIGN…AVLY), 424-444 (LPML…FASV), 461-481 (ADPY…QTYL), and 498-518 (PLVF…YWVV).

Belongs to the OXA1/ALB3/YidC family. Type 1 subfamily. As to quaternary structure, interacts with the Sec translocase complex via SecD. Specifically interacts with transmembrane segments of nascent integral membrane proteins during membrane integration.

Its subcellular location is the cell inner membrane. Its function is as follows. Required for the insertion and/or proper folding and/or complex formation of integral membrane proteins into the membrane. Involved in integration of membrane proteins that insert both dependently and independently of the Sec translocase complex, as well as at least some lipoproteins. Aids folding of multispanning membrane proteins. This Neisseria gonorrhoeae (strain ATCC 700825 / FA 1090) protein is Membrane protein insertase YidC.